The primary structure comprises 497 residues: Cytochrome P450 76AD1 (497 aa).

A helical membrane pass occupies residues 4-24; it reads ATLAMILAIWFISFHFIKLLF. Position 439 (cysteine 439) interacts with heme.

This sequence belongs to the cytochrome P450 family. Heme serves as cofactor.

Its subcellular location is the membrane. It participates in pigment biosynthesis; betalain biosynthesis. Converts L-DOPA to cyclo-DOPA in the betalain pathway. Provides the cyclo-DOPA moiety of all red betacyanins. This chain is Cytochrome P450 76AD1, found in Beta vulgaris (Sugar beet).